We begin with the raw amino-acid sequence, 703 residues long: Fanconi-associated nuclease 1 homolog (703 aa).

Mn(2+)-binding residues include E529, D651, E666, and V667. Residues 597 to 698 enclose the VRR-NUC domain; the sequence is YIREHQRKTF…EVDVEVCHVS (102 aa).

It belongs to the FAN1 family. Requires Mn(2+) as cofactor. The cofactor is Mg(2+).

Its subcellular location is the nucleus. The enzyme catalyses Hydrolytically removes 5'-nucleotides successively from the 3'-hydroxy termini of 3'-hydroxy-terminated oligonucleotides.. Functionally, nuclease required for the repair of DNA interstrand cross-links (ICL). Acts as a 5'-3' exonuclease that anchors at a cut end of DNA and cleaves DNA successively at every third nucleotide, allowing to excise an ICL from one strand through flanking incisions. This Schizosaccharomyces pombe (strain 972 / ATCC 24843) (Fission yeast) protein is Fanconi-associated nuclease 1 homolog.